We begin with the raw amino-acid sequence, 352 residues long: Type II restriction enzyme HaeII (352 aa).

The enzyme catalyses Endonucleolytic cleavage of DNA to give specific double-stranded fragments with terminal 5'-phosphates.. Its function is as follows. A P subtype restriction enzyme that recognizes the double-stranded sequence 5'-RGCGCY-3' and cleaves after C-5. The sequence is that of Type II restriction enzyme HaeII (haeIIR) from Haemophilus aegyptius.